A 383-amino-acid chain; its full sequence is ATP phosphoribosyltransferase regulatory subunit (383 aa).

The protein belongs to the class-II aminoacyl-tRNA synthetase family. HisZ subfamily. As to quaternary structure, heteromultimer composed of HisG and HisZ subunits.

The protein resides in the cytoplasm. It participates in amino-acid biosynthesis; L-histidine biosynthesis; L-histidine from 5-phospho-alpha-D-ribose 1-diphosphate: step 1/9. Functionally, required for the first step of histidine biosynthesis. May allow the feedback regulation of ATP phosphoribosyltransferase activity by histidine. This is ATP phosphoribosyltransferase regulatory subunit from Neisseria meningitidis serogroup C / serotype 2a (strain ATCC 700532 / DSM 15464 / FAM18).